A 463-amino-acid chain; its full sequence is Argininosuccinate lyase (463 aa).

It belongs to the lyase 1 family. Argininosuccinate lyase subfamily.

The protein localises to the cytoplasm. It catalyses the reaction 2-(N(omega)-L-arginino)succinate = fumarate + L-arginine. The protein operates within amino-acid biosynthesis; L-arginine biosynthesis; L-arginine from L-ornithine and carbamoyl phosphate: step 3/3. This is Argininosuccinate lyase from Chlorobaculum parvum (strain DSM 263 / NCIMB 8327) (Chlorobium vibrioforme subsp. thiosulfatophilum).